We begin with the raw amino-acid sequence, 201 residues long: 3-isopropylmalate dehydratase small subunit (201 aa).

It belongs to the LeuD family. LeuD type 1 subfamily. In terms of assembly, heterodimer of LeuC and LeuD.

The catalysed reaction is (2R,3S)-3-isopropylmalate = (2S)-2-isopropylmalate. The protein operates within amino-acid biosynthesis; L-leucine biosynthesis; L-leucine from 3-methyl-2-oxobutanoate: step 2/4. Its function is as follows. Catalyzes the isomerization between 2-isopropylmalate and 3-isopropylmalate, via the formation of 2-isopropylmaleate. This is 3-isopropylmalate dehydratase small subunit from Rhizobium meliloti (strain 1021) (Ensifer meliloti).